The sequence spans 193 residues: dTTP/UTP pyrophosphatase (193 aa).

Asp68 serves as the catalytic Proton acceptor.

Belongs to the Maf family. YhdE subfamily. The cofactor is a divalent metal cation.

It localises to the cytoplasm. The catalysed reaction is dTTP + H2O = dTMP + diphosphate + H(+). It catalyses the reaction UTP + H2O = UMP + diphosphate + H(+). Its function is as follows. Nucleoside triphosphate pyrophosphatase that hydrolyzes dTTP and UTP. May have a dual role in cell division arrest and in preventing the incorporation of modified nucleotides into cellular nucleic acids. The sequence is that of dTTP/UTP pyrophosphatase from Ruegeria sp. (strain TM1040) (Silicibacter sp.).